The sequence spans 62 residues: Large ribosomal subunit protein bL32 (62 aa).

Over residues 1–19 the composition is skewed to basic residues; that stretch reads MPNPKRRHSKARTGNRRAH. The interval 1–23 is disordered; that stretch reads MPNPKRRHSKARTGNRRAHDHLS.

This sequence belongs to the bacterial ribosomal protein bL32 family.

This Koribacter versatilis (strain Ellin345) protein is Large ribosomal subunit protein bL32.